The sequence spans 220 residues: Claudin-24 (220 aa).

The Cytoplasmic portion of the chain corresponds to 1–10; sequence MALIFRTAMQ. The chain crosses the membrane as a helical span at residues 11-31; that stretch reads SVGLLLSLLGWILSIITTYLP. Over 32–81 the chain is Extracellular; sequence HWKNLNLDLNEMENWTMGLWQTCVIQEEVGMQCKDFDSFLALPAELRVSR. The helical transmembrane segment at 82–102 threads the bilayer; it reads ILMFLSNGLGFLGLLVSGFGL. Residues 103–117 are Cytoplasmic-facing; sequence DCLRIGESQRDLKRR. The helical transmembrane segment at 118–138 threads the bilayer; the sequence is LLILGGILSWASGITALVPVS. Residues 139-161 lie on the Extracellular side of the membrane; it reads WVAHKTVQEFWDENVPDFVPRWE. A helical transmembrane segment spans residues 162 to 182; sequence FGEALFLGWFAGLSLLLGGCL. The Cytoplasmic portion of the chain corresponds to 183 to 220; it reads LNCAACSSHAPLALGHYAVAQMQTQCPYLEDGTADPQV.

The protein belongs to the claudin family.

Its subcellular location is the cell junction. It is found in the tight junction. The protein localises to the cell membrane. In terms of biological role, plays a major role in tight junction-specific obliteration of the intercellular space, through calcium-independent cell-adhesion activity. The protein is Claudin-24 of Homo sapiens (Human).